A 422-amino-acid chain; its full sequence is Phospho-N-acetylmuramoyl-pentapeptide-transferase (422 aa).

Helical transmembrane passes span 28–48 (LMAI…FINL), 71–91 (VGVP…PCLL), 95–115 (LHNI…TLGF), 136–156 (IIGQ…SPSV), 208–228 (AQAV…TAVS), 239–259 (GMAA…AYVS), 279–299 (LVIF…YNAF), 313–333 (IGGI…IPIL), and 399–419 (KITV…IITL).

This sequence belongs to the glycosyltransferase 4 family. MraY subfamily. It depends on Mg(2+) as a cofactor.

Its subcellular location is the cell inner membrane. It carries out the reaction UDP-N-acetyl-alpha-D-muramoyl-L-alanyl-gamma-D-glutamyl-meso-2,6-diaminopimeloyl-D-alanyl-D-alanine + di-trans,octa-cis-undecaprenyl phosphate = di-trans,octa-cis-undecaprenyl diphospho-N-acetyl-alpha-D-muramoyl-L-alanyl-D-glutamyl-meso-2,6-diaminopimeloyl-D-alanyl-D-alanine + UMP. It functions in the pathway cell wall biogenesis; peptidoglycan biosynthesis. Catalyzes the initial step of the lipid cycle reactions in the biosynthesis of the cell wall peptidoglycan: transfers peptidoglycan precursor phospho-MurNAc-pentapeptide from UDP-MurNAc-pentapeptide onto the lipid carrier undecaprenyl phosphate, yielding undecaprenyl-pyrophosphoryl-MurNAc-pentapeptide, known as lipid I. The protein is Phospho-N-acetylmuramoyl-pentapeptide-transferase of Phocaeicola vulgatus (strain ATCC 8482 / DSM 1447 / JCM 5826 / CCUG 4940 / NBRC 14291 / NCTC 11154) (Bacteroides vulgatus).